The primary structure comprises 474 residues: Proline--tRNA ligase (474 aa).

The protein belongs to the class-II aminoacyl-tRNA synthetase family. ProS type 3 subfamily. As to quaternary structure, homodimer.

It is found in the cytoplasm. The enzyme catalyses tRNA(Pro) + L-proline + ATP = L-prolyl-tRNA(Pro) + AMP + diphosphate. Functionally, catalyzes the attachment of proline to tRNA(Pro) in a two-step reaction: proline is first activated by ATP to form Pro-AMP and then transferred to the acceptor end of tRNA(Pro). This is Proline--tRNA ligase from Onion yellows phytoplasma (strain OY-M).